A 459-amino-acid polypeptide reads, in one-letter code: Aluminum-activated malate transporter 1 (459 aa).

At 1 to 52 (MDIDHGRESDGEMVGTIASCGLLLHSLLAGLGRRAAGFARKVGGAAREDPRR) the chain is on the extracellular side. Transmembrane regions (helical) follow at residues 53-73 (VAHS…YFVT) and 74-94 (PLFN…VVVM). Topologically, residues 95–108 (EYTVGATLSKGLNR) are extracellular. Residues 109–129 (ALATLVAGCIAVGAHQLAELA) traverse the membrane as a helical segment. Residues 130 to 137 (ERCGDQGE) lie on the Cytoplasmic side of the membrane. Residues 138 to 158 (PIVLTVLVFFVASAATFLRFI) traverse the membrane as a helical segment. The Extracellular portion of the chain corresponds to 159–160 (PE). A helical membrane pass occupies residues 161–181 (IKAKYDYGVTIFILTFGLVAV). Residues 182–199 (SSYRVEELIQLAHQRFYT) lie on the Cytoplasmic side of the membrane. The helical transmembrane segment at 200-220 (IAVGVFICLCTTVFLFPVWAG) threads the bilayer. Over 221 to 459 (EDVHKLASGN…DEPLPDVVIL (239 aa)) the chain is Extracellular.

The protein belongs to the aromatic acid exporter (TC 2.A.85) family. In terms of tissue distribution, detected in root tips.

It localises to the cell membrane. Its activity is regulated as follows. Activated by external aluminum. The enhancement of malate transport is not due to alteration in the selectivity properties but is due to an increased anion permeability. In terms of biological role, malate transporter critical for aluminum tolerance. Permeable to chloride, nitrate, sulfate and malate. The chain is Aluminum-activated malate transporter 1 (ALMT1) from Triticum aestivum (Wheat).